The primary structure comprises 297 residues: HTH-type transcriptional regulator IlvY (297 aa).

An HTH lysR-type domain is found at 1-58 (MDLRDLKTFLHLAESRHFGRSARAMHVSPSTLSRQIQRLEEDLGQPLFVRDNRTVTLT). Residues 18–37 (FGRSARAMHVSPSTLSRQIQ) constitute a DNA-binding region (H-T-H motif).

This sequence belongs to the LysR transcriptional regulatory family.

Its subcellular location is the cytoplasm. Its function is as follows. This protein activates the transcription of the ilvC gene in the presence of acetolactate or acetohydroxybutyrate. IlvY is also a negative regulator of its own expression. This chain is HTH-type transcriptional regulator IlvY (ilvY), found in Escherichia coli (strain K12).